Reading from the N-terminus, the 499-residue chain is MEKYIMALDQGTTSSRCILFNQRGEVCSVAQKEFTQVYPRTGWVEHRPMDIWSSQISVAAEAMAAIGAKAEDIDSIGITNQRETTIVWDKNTGEPVYNAIVWQCHRTADMIEQLKKDGFDSVIRKKTGLIPDAYFSATKIKWILDNVDGVRERAEAGSLLFGTVDTWIIWNLTKGRVHVTDYTNASRTMLFDIHNLCWDDEILTYFKIPKSMLPKVQASSSIFGHTEEGLLGGEILISGAAGDQQAALFGQCCFEPGEVKNTYGTGCFLLMNTGDTAIESQNGLLTTIAAGDAGHIEYALEGSVFVAGAAIQWLRDEQRMIKKASQSEEYAKEVEDTNGVYVVPAFTGLGAPYWNPYARGTIVGITRGFSKEHMIRATLESLAYQTVNVLHAMEQDSNISLKSLRVDGGASANNFLMQFQADVLNTLVYRPQCIETTALGAAYLAGLATGYFKDRNEIKDNWTLGGTFSPQMDEQKRKELLKGWKRAVRCALAWAEDIE.

Thr-12 lines the ADP pocket. Thr-12, Thr-13, and Ser-14 together coordinate ATP. Thr-12 contributes to the sn-glycerol 3-phosphate binding site. Position 16 (Arg-16) interacts with ADP. Sn-glycerol 3-phosphate-binding residues include Arg-82, Glu-83, Tyr-134, and Asp-243. Glycerol is bound by residues Arg-82, Glu-83, Tyr-134, Asp-243, and Gln-244. Thr-265 and Gly-308 together coordinate ADP. Residues Thr-265, Gly-308, Gln-312, and Gly-409 each contribute to the ATP site. Residues Gly-409 and Asn-413 each contribute to the ADP site.

Belongs to the FGGY kinase family. As to quaternary structure, homotetramer and homodimer (in equilibrium).

The catalysed reaction is glycerol + ATP = sn-glycerol 3-phosphate + ADP + H(+). It participates in polyol metabolism; glycerol degradation via glycerol kinase pathway; sn-glycerol 3-phosphate from glycerol: step 1/1. Its activity is regulated as follows. Activated by phosphorylation and inhibited by fructose 1,6-bisphosphate (FBP). In terms of biological role, key enzyme in the regulation of glycerol uptake and metabolism. Catalyzes the phosphorylation of glycerol to yield sn-glycerol 3-phosphate. In Lachnoclostridium phytofermentans (strain ATCC 700394 / DSM 18823 / ISDg) (Clostridium phytofermentans), this protein is Glycerol kinase.